We begin with the raw amino-acid sequence, 563 residues long: Arginine--tRNA ligase (563 aa).

The 'HIGH' region signature appears at 121-131 (PNIAKPFSIGH).

This sequence belongs to the class-I aminoacyl-tRNA synthetase family. In terms of assembly, monomer.

It localises to the cytoplasm. The catalysed reaction is tRNA(Arg) + L-arginine + ATP = L-arginyl-tRNA(Arg) + AMP + diphosphate. This chain is Arginine--tRNA ligase, found in Streptococcus thermophilus (strain ATCC BAA-250 / LMG 18311).